We begin with the raw amino-acid sequence, 441 residues long: Probable magnesium transporter NIPA8 (441 aa).

The Extracellular segment spans residues 1-4; the sequence is MGEW. A helical membrane pass occupies residues 5–25; that stretch reads VIGAFINIFGSVAINFGTNLL. Topologically, residues 26 to 56 are cytoplasmic; sequence KLGHNERERLALQDGGGKMPLKPIIHNQTWR. Residues 57-77 form a helical membrane-spanning segment; sequence VGILVFLLGNCLNFISFGYAA. The Extracellular portion of the chain corresponds to 78–79; it reads QS. The helical transmembrane segment at 80–100 threads the bilayer; sequence LLAALGSIQFVSNIAFAYVVL. Residues 101 to 105 are Cytoplasmic-facing; that stretch reads NKMVT. A helical transmembrane segment spans residues 106–126; the sequence is VKVLVATAFIVLGNVFLVAFG. At 127–144 the chain is on the extracellular side; that stretch reads NHQSPVFTPEQLAEKYSN. Residues 145 to 165 form a helical membrane-spanning segment; that stretch reads VTFLVYCGILILIVAVHHFLY. The Cytoplasmic portion of the chain corresponds to 166–184; the sequence is RKGEVLISTPGQEISSYWK. A helical membrane pass occupies residues 185–205; it reads MLLPFSYAVVSGAIGSCSVLF. The Extracellular portion of the chain corresponds to 206–222; sequence AKSLSNLLRLAMSSSYQ. Residues 223–243 form a helical membrane-spanning segment; sequence LHSWFTYSMLLLFLSTAGFWM. Over 244 to 255 the chain is Cytoplasmic; it reads TRLNEGLSLYDA. Residues 256 to 276 form a helical membrane-spanning segment; that stretch reads ILIVPMFQIAWTFFSICTGCI. Over 277-288 the chain is Extracellular; the sequence is YFQEFQVFDALR. A helical membrane pass occupies residues 289-309; it reads TTMFILGMMCVFIGISLLAPD. Residues 310-441 lie on the Cytoplasmic side of the membrane; it reads DTRGNETKDN…MLEKTISSKA (132 aa). The segment at 313 to 347 is disordered; that stretch reads GNETKDNSSSLDSIVSSSVPTEEDRLIPQSSEDGH. The span at 320–330 shows a compositional bias: low complexity; it reads SSSLDSIVSSS. Residues 334–347 are compositionally biased toward basic and acidic residues; sequence EEDRLIPQSSEDGH.

This sequence belongs to the NIPA (TC 2.A.7) family. As to quaternary structure, homodimer.

It is found in the cell membrane. The protein resides in the early endosome. Functionally, acts as a Mg(2+) transporter. Can also transport other divalent cations such as Fe(2+), Sr(2+), Ba(2+), Mn(2+) and Co(2+) but to a much less extent than Mg(2+). This is Probable magnesium transporter NIPA8 from Arabidopsis thaliana (Mouse-ear cress).